We begin with the raw amino-acid sequence, 205 residues long: dITP/XTP pyrophosphatase (205 aa).

8–13 (SGNKGK) is a binding site for substrate. The active-site Proton acceptor is the D69. D69 is a binding site for Mg(2+). Residues S70, 153 to 156 (HGYD), K176, and 181 to 182 (HR) contribute to the substrate site.

This sequence belongs to the HAM1 NTPase family. Homodimer. The cofactor is Mg(2+).

The catalysed reaction is XTP + H2O = XMP + diphosphate + H(+). It carries out the reaction dITP + H2O = dIMP + diphosphate + H(+). The enzyme catalyses ITP + H2O = IMP + diphosphate + H(+). Its function is as follows. Pyrophosphatase that catalyzes the hydrolysis of nucleoside triphosphates to their monophosphate derivatives, with a high preference for the non-canonical purine nucleotides XTP (xanthosine triphosphate), dITP (deoxyinosine triphosphate) and ITP. Seems to function as a house-cleaning enzyme that removes non-canonical purine nucleotides from the nucleotide pool, thus preventing their incorporation into DNA/RNA and avoiding chromosomal lesions. This chain is dITP/XTP pyrophosphatase, found in Shewanella oneidensis (strain ATCC 700550 / JCM 31522 / CIP 106686 / LMG 19005 / NCIMB 14063 / MR-1).